Here is a 352-residue protein sequence, read N- to C-terminus: Glutamine synthetase (352 aa).

One can recognise a GS beta-grasp domain in the interval 3–82 (YQAEYIWIDG…LCEVQLTDFT (80 aa)). The GS catalytic domain occupies 87 to 352 (TRAAALGVAE…TTPAPAEASV (266 aa)). Positions 108 and 110 each coordinate Mg(2+). E164 is a binding site for ATP. Mg(2+) is bound by residues E169 and E176. E272 is an L-glutamate binding site.

It belongs to the glutamine synthetase family. As to quaternary structure, homooctamer and homotetramer. Requires Mg(2+) as cofactor.

It localises to the cytoplasm. The catalysed reaction is L-glutamate + NH4(+) + ATP = L-glutamine + ADP + phosphate + H(+). Functionally, catalyzes the ATP-dependent biosynthesis of glutamine from glutamate and ammonia. The polypeptide is Glutamine synthetase (Frankia alni).